Here is a 61-residue protein sequence, read N- to C-terminus: Small ribosomal subunit protein uS14 (61 aa).

Zn(2+) is bound by residues C24, C27, C40, and C43.

Belongs to the universal ribosomal protein uS14 family. Zinc-binding uS14 subfamily. Part of the 30S ribosomal subunit. Contacts proteins S3 and S10. It depends on Zn(2+) as a cofactor.

Its function is as follows. Binds 16S rRNA, required for the assembly of 30S particles and may also be responsible for determining the conformation of the 16S rRNA at the A site. The chain is Small ribosomal subunit protein uS14 from Streptococcus mutans serotype c (strain ATCC 700610 / UA159).